Consider the following 461-residue polypeptide: Putative cytochrome P450 132 (461 aa).

C409 contributes to the heme binding site.

Belongs to the cytochrome P450 family. Heme is required as a cofactor.

The protein is Putative cytochrome P450 132 (cyp132) of Mycobacterium bovis (strain ATCC BAA-935 / AF2122/97).